We begin with the raw amino-acid sequence, 1033 residues long: Lethal(2) giant larvae protein homolog SRO7 (1033 aa).

The segment at 16-45 (SLKGQNSETPIENSKASFKSKNSKTSTISK) is disordered. The segment covering 18 to 27 (KGQNSETPIE) has biased composition (polar residues). The span at 28–45 (NSKASFKSKNSKTSTISK) shows a compositional bias: low complexity. WD repeat units follow at residues 81–114 (IAAA…VVIK), 121–156 (IKEM…TTVF), 161–197 (ITSI…SFKL), 216–249 (SIQW…KQSF), 274–309 (VIQS…IMAR), 333–397 (KISK…MKIF), 405–440 (IVNI…ETML), 464–538 (ATTS…FEVN), 552–631 (DKIS…STAV), 638–673 (TSAI…YMEN), 685–736 (VTCI…DITN), 745–799 (KIDA…THKG), 804–851 (LAAT…MSEH), and 865–888 (SVLR…STVK). A phosphoserine mark is found at serine 591 and serine 602. Residues 953–984 (SFSERSSDDNNANHPEHQYTKPTRKGRNSSYG) are disordered.

It belongs to the WD repeat L(2)GL family. In terms of assembly, interacts with MYO2 and SEC9.

The protein localises to the cytoplasm. The protein resides in the cell membrane. Acts as an allosteric regulator of polarized exocytosis by promoting the targeted fusion of vesicles with the plasma membrane. Coordinates the spatial and temporal nature of both Rab-dependent tethering and SNARE-dependent membrane fusion of exocytic vesicles with the plasma membrane. Required for targeting of the sodium pumping ATPase ENA1 to the Cell Surface, thus being involved in maintenance of ion homeostasis in cells exposed to NaCl stress. May be involved in the targeting of the myosin proteins to their intrinsic pathways. Multicopy suppressor of RHO3. May also participate in the maintenance of cell polarity and bud growth. The sequence is that of Lethal(2) giant larvae protein homolog SRO7 (SRO7) from Saccharomyces cerevisiae (strain ATCC 204508 / S288c) (Baker's yeast).